Reading from the N-terminus, the 117-residue chain is DNA-directed RNA polymerase subunit omega (117 aa).

The protein belongs to the RNA polymerase subunit omega family. In terms of assembly, the RNAP catalytic core consists of 2 alpha, 1 beta, 1 beta' and 1 omega subunit. When a sigma factor is associated with the core the holoenzyme is formed, which can initiate transcription.

It carries out the reaction RNA(n) + a ribonucleoside 5'-triphosphate = RNA(n+1) + diphosphate. Its function is as follows. Promotes RNA polymerase assembly. Latches the N- and C-terminal regions of the beta' subunit thereby facilitating its interaction with the beta and alpha subunits. The chain is DNA-directed RNA polymerase subunit omega from Cereibacter sphaeroides (strain ATCC 17029 / ATH 2.4.9) (Rhodobacter sphaeroides).